The sequence spans 427 residues: MNRAGNIEKAFELAREEYQAIGVDVDSALQRMRDVEISVHCWQGDDVKGFEGDDGALGNGLAVTGNYPGRARTIDELQSDLELAYSLIPGNHRLNLHALYGEFKGRVDRDEIEVEHFQGWIDWARDQKVRLDFNPSYFSHPNAADGFTLAHADSGIRQFWIDHGIACRKIAAAMGAAQSNPCINNFWVPDGYKDVPADRKAPRERLADSLDSIFATEYPAEQTLDAVECKLFGIGSESYVVGSHEFYMGYAMSRYKVLCLDAGHFHPTETISDKISAVMMYVPELLLHVSRGVRWDSDHVVTYSDELQSIMQEVVRGDYLGRVHIGLDFFDASINRVAAWAIGTRNALKAVLAALLEPTEQLRKMELEGDLTGRLALLEEQKTLPLGAVWNHYCQSVDVPAGSDWLENVRQYESQVLSQRSDSSALV.

Residues histidine 264, aspartate 296, and aspartate 298 each contribute to the Mn(2+) site.

The protein belongs to the rhamnose isomerase family. Requires Mn(2+) as cofactor.

Its subcellular location is the cytoplasm. It carries out the reaction L-rhamnopyranose = L-rhamnulose. It participates in carbohydrate degradation; L-rhamnose degradation; glycerone phosphate from L-rhamnose: step 1/3. Its function is as follows. Catalyzes the interconversion of L-rhamnose and L-rhamnulose. This chain is L-rhamnose isomerase, found in Rhodopirellula baltica (strain DSM 10527 / NCIMB 13988 / SH1).